Consider the following 372-residue polypeptide: N-methyl-L-tryptophan oxidase (372 aa).

4 to 34 (DLIIIGSGSVGAAAGYYATRAGLNVLMTDAH) contributes to the FAD binding site. C308 is modified (S-8alpha-FAD cysteine).

This sequence belongs to the MSOX/MTOX family. MTOX subfamily. As to quaternary structure, monomer. Requires FAD as cofactor.

It catalyses the reaction N(alpha)-methyl-L-tryptophan + O2 + H2O = L-tryptophan + formaldehyde + H2O2. Catalyzes the oxidative demethylation of N-methyl-L-tryptophan. The protein is N-methyl-L-tryptophan oxidase of Escherichia coli O157:H7.